Consider the following 262-residue polypeptide: Dihydroorotate dehydrogenase B (NAD(+)), electron transfer subunit (262 aa).

The 101-residue stretch at 2–102 (SKVFDAKVLA…MGPLGRGFTL (101 aa)) folds into the FAD-binding FR-type domain. Residues 53 to 56 (RPIS), 70 to 72 (LFR), and 77 to 78 (GT) contribute to the FAD site. [2Fe-2S] cluster is bound by residues Cys224, Cys229, Cys232, and Cys248.

It belongs to the PyrK family. Heterotetramer of 2 PyrK and 2 PyrD type B subunits. However, the metal reductase complex seems to be composed of a heterooctamer of 4 PyrK and 4 PyrD subunits. It depends on FAD as a cofactor. [2Fe-2S] cluster serves as cofactor.

The protein resides in the cytoplasm. It functions in the pathway pyrimidine metabolism; UMP biosynthesis via de novo pathway; orotate from (S)-dihydroorotate (NAD(+) route): step 1/1. Responsible for channeling the electrons from the oxidation of dihydroorotate from the FMN redox center in the PyrD type B subunit to the ultimate electron acceptor NAD(+). In terms of biological role, together with PyrD, also forms a metal reductase complex able to reduce Fe(III)-chelates to Fe(II)-chelates, as well as soluble Cr(VI) and U(VI), using NADH as electron donor. To a lesser extent, can also use NADPH as an electron donor. Is unable to reduce riboflavin and FMN with NADH as electron donor. May have an in vivo role in metal reduction in D.reducens, which is an organism capable of reducing contaminant heavy metals and radionuclides. This is Dihydroorotate dehydrogenase B (NAD(+)), electron transfer subunit from Desulforamulus reducens (strain ATCC BAA-1160 / DSM 100696 / MI-1) (Desulfotomaculum reducens).